The primary structure comprises 656 residues: MQTPLIDLRAIRKSYGGGDSPLVNVLRGIDLSIHAGEFVAIVGASGSGKSTLMNILGCLDRPTSGEYLFAGENVAELGSDELAWLRREAFGFVFQGYHLIPSGSAQENVEMPAIYAGTPAAERHARAAALLDRLGLGSRTGNRPHQLSGGQQQRVSIARALMNGGHIILADEPTGALDSHSGAEVMALLDELASQGHVVILITHDREVAARAKRVIEISDGLVVSDTACDLSAPRSANPAALQAVDLRKRLSEGSGSRGAWKGELLDAVQAAWRVMWINRFRTALTLLGIVIGVASVVVMLAVGEGSKRQVMAQMSSFGSNIIYLNGKAPNPRAPKGIITLDEVAALGELPEVKMIMPVNGGQAGVRYGNVDHSSYVGGNDTHFPAIFNWPVVEGSYFSEADEQSAAAVAVIGYKVRQKLFGEHTDPIGQYILIENVPFQVVGVLEEKGATSGDLDSDNRIAIPYSAASIRLFGSQDPEYITIATRDANNVKHAEEAIRNLLQRLHNGKQDYELTNNAAMIQAEARTQNTLSLMLGSIAAISLLVGGIGVMNIMLMTVRERTREIGIRMATGARQSDILRQFLTEAVMLSVVGGLAGVVLALGMGAALLLSKVAVAFTVPAVAGAFACALVTGVIFGFMPARKAARLDPVAALTSE.

In terms of domain architecture, ABC transporter spans I6–V245. G43–S50 contributes to the ATP binding site. Helical transmembrane passes span A284–G304, I538–V558, L589–L609, and V619–M639.

It belongs to the ABC transporter superfamily. Macrolide exporter (TC 3.A.1.122) family. As to quaternary structure, part of the tripartite efflux system PvdRT-OpmQ, which is composed of an inner membrane component with both ATPase and permease domains, PvdT, a periplasmic membrane fusion protein, PvdR, and an outer membrane component, OpmQ.

The protein localises to the cell inner membrane. Functionally, part of the tripartite efflux system PvdRT-OpmQ required for the secretion into the extracellular milieu of the siderophore pyoverdine (PVD), which is involved in iron acquisition. This subunit binds PVD and drives its secretion by hydrolyzing ATP. The system is responsible for export of newly synthesized PVD after the final steps of biosynthesis have taken place in the periplasm. It is also responsible for recycling of PVD after internalization of ferri-PVD into the periplasm by the outer-membrane receptor FpvA and release of iron from PVD, thus making PVD available for new cycles of iron uptake. This chain is Pyoverdine export ATP-binding/permease protein PvdT, found in Pseudomonas savastanoi pv. phaseolicola (strain 1448A / Race 6) (Pseudomonas syringae pv. phaseolicola (strain 1448A / Race 6)).